The sequence spans 100 residues: Putative antiporter subunit mnhF2 (100 aa).

The next 3 helical transmembrane spans lie at 5-25 (FTQIFIISALVIFGMALLVCL), 38-60 (VVSFDASSAVVMSIVGVMSVIFN), and 65-87 (LDSIMLIAIISFVSSVSISRFIG).

This sequence belongs to the CPA3 antiporters (TC 2.A.63) subunit F family. May form a heterooligomeric complex that consists of seven subunits: mnhA2, mnhB2, mnhC2, mnhD2, mnhE2, mnhF2 and mnhG2.

It localises to the cell membrane. The protein is Putative antiporter subunit mnhF2 (mnhF2) of Staphylococcus epidermidis (strain ATCC 35984 / DSM 28319 / BCRC 17069 / CCUG 31568 / BM 3577 / RP62A).